A 602-amino-acid chain; its full sequence is Pentatricopeptide repeat-containing protein At3g04760, chloroplastic (602 aa).

Residues 1–78 constitute a chloroplast transit peptide; sequence MTPLSSELVG…TDATLPTERR (78 aa). The segment covering 42–64 has biased composition (polar residues); it reads FSNSNPNNDNGRSFSSSGARNLQ. The tract at residues 42–85 is disordered; sequence FSNSNPNNDNGRSFSSSGARNLQTTTTTDATLPTERRQQHSQSL. Over residues 65-74 the composition is skewed to low complexity; that stretch reads TTTTTDATLP. 14 PPR repeats span residues 88-122, 123-153, 157-191, 192-226, 227-261, 262-296, 297-331, 332-366, 367-401, 402-436, 437-471, 472-506, 507-541, and 542-576; these read RDTQMLKIFHRSCRSGNYIESLHLLETMVRKGYNP, DVILCTKLIKGFFTLRNIPKAVRVMEILEKF, DVFAYNALINGFCKMNRIDDATRVLDRMRSKDFSP, DTVTYNIMIGSLCSRGKLDLALKVLNQLLSDNCQP, TVITYTILIEATMLEGGVDEALKLMDEMLSRGLKP, DMFTYNTIIRGMCKEGMVDRAFEMVRNLELKGCEP, DVISYNILLRALLNQGKWEEGEKLMTKMFSEKCDP, NVVTYSILITTLCRDGKIEEAMNLLKLMKEKGLTP, DAYSYDPLIAAFCREGRLDVAIEFLETMISDGCLP, DIVNYNTVLATLCKNGKADQALEIFGKLGEVGCSP, NSSSYNTMFSALWSSGDKIRALHMILEMMSNGIDP, DEITYNSMISCLCREGMVDEAFELLVDMRSCEFHP, SVVTYNIVLLGFCKAHRIEDAINVLESMVGNGCRP, and NETTYTVLIEGIGFAGYRAEAMELANDLVRIDAIS.

Belongs to the PPR family. P subfamily.

The protein resides in the plastid. It is found in the chloroplast. The polypeptide is Pentatricopeptide repeat-containing protein At3g04760, chloroplastic (Arabidopsis thaliana (Mouse-ear cress)).